The following is a 177-amino-acid chain: Early nodulin-like protein 6 (177 aa).

A signal peptide spans 1–23 (MGGQKIVLLSIFVCFYVFSLVSC). In terms of domain architecture, Phytocyanin spans 24 to 127 (TEFEAGGENG…GQKMIIKVME (104 aa)). N-linked (GlcNAc...) asparagine glycosylation occurs at Asn41. Residues Cys81 and Cys115 are joined by a disulfide bond. Asn149 carries the GPI-anchor amidated asparagine lipid modification. Residues 150–177 (HAVRKTSRFLGAGLVTISILVITVFSLV) constitute a propeptide, removed in mature form.

Belongs to the early nodulin-like (ENODL) family. As to expression, confined to flowers.

It is found in the cell membrane. Functionally, may act as a carbohydrate transporter. The sequence is that of Early nodulin-like protein 6 from Arabidopsis thaliana (Mouse-ear cress).